Consider the following 149-residue polypeptide: Nucleoside diphosphate kinase (149 aa).

6 residues coordinate ATP: lysine 9, phenylalanine 57, arginine 85, threonine 91, arginine 102, and asparagine 112. Residue histidine 115 is the Pros-phosphohistidine intermediate of the active site.

The protein belongs to the NDK family. As to quaternary structure, homotetramer. Mg(2+) is required as a cofactor.

The protein localises to the cytoplasm. It carries out the reaction a 2'-deoxyribonucleoside 5'-diphosphate + ATP = a 2'-deoxyribonucleoside 5'-triphosphate + ADP. The catalysed reaction is a ribonucleoside 5'-diphosphate + ATP = a ribonucleoside 5'-triphosphate + ADP. Functionally, major role in the synthesis of nucleoside triphosphates other than ATP. The ATP gamma phosphate is transferred to the NDP beta phosphate via a ping-pong mechanism, using a phosphorylated active-site intermediate. The sequence is that of Nucleoside diphosphate kinase from Acaryochloris marina (strain MBIC 11017).